The following is a 105-amino-acid chain: ATP-dependent Clp protease adapter protein ClpS (105 aa).

This sequence belongs to the ClpS family. As to quaternary structure, binds to the N-terminal domain of the chaperone ClpA.

Functionally, involved in the modulation of the specificity of the ClpAP-mediated ATP-dependent protein degradation. The polypeptide is ATP-dependent Clp protease adapter protein ClpS (Aeromonas salmonicida (strain A449)).